The sequence spans 152 residues: Large ribosomal subunit protein uL13 (152 aa).

The protein belongs to the universal ribosomal protein uL13 family. In terms of assembly, part of the 50S ribosomal subunit.

Functionally, this protein is one of the early assembly proteins of the 50S ribosomal subunit, although it is not seen to bind rRNA by itself. It is important during the early stages of 50S assembly. The sequence is that of Large ribosomal subunit protein uL13 from Wolbachia pipientis wMel.